The sequence spans 453 residues: tRNA-2-methylthio-N(6)-dimethylallyladenosine synthase (453 aa).

The region spanning arginine 21–alanine 137 is the MTTase N-terminal domain. [4Fe-4S] cluster-binding residues include cysteine 30, cysteine 66, cysteine 100, cysteine 174, cysteine 178, and cysteine 181. A Radical SAM core domain is found at arginine 160 to glutamate 389. Residues lysine 392–isoleucine 453 form the TRAM domain.

It belongs to the methylthiotransferase family. MiaB subfamily. As to quaternary structure, monomer. Requires [4Fe-4S] cluster as cofactor.

The protein resides in the cytoplasm. It carries out the reaction N(6)-dimethylallyladenosine(37) in tRNA + (sulfur carrier)-SH + AH2 + 2 S-adenosyl-L-methionine = 2-methylsulfanyl-N(6)-dimethylallyladenosine(37) in tRNA + (sulfur carrier)-H + 5'-deoxyadenosine + L-methionine + A + S-adenosyl-L-homocysteine + 2 H(+). Its function is as follows. Catalyzes the methylthiolation of N6-(dimethylallyl)adenosine (i(6)A), leading to the formation of 2-methylthio-N6-(dimethylallyl)adenosine (ms(2)i(6)A) at position 37 in tRNAs that read codons beginning with uridine. This is tRNA-2-methylthio-N(6)-dimethylallyladenosine synthase from Bdellovibrio bacteriovorus (strain ATCC 15356 / DSM 50701 / NCIMB 9529 / HD100).